We begin with the raw amino-acid sequence, 309 residues long: Ribonuclease Z (309 aa).

Residues H63, H65, D67, H68, H141, D212, and H270 each coordinate Zn(2+). Residue D67 is the Proton acceptor of the active site.

Belongs to the RNase Z family. In terms of assembly, homodimer. It depends on Zn(2+) as a cofactor.

The enzyme catalyses Endonucleolytic cleavage of RNA, removing extra 3' nucleotides from tRNA precursor, generating 3' termini of tRNAs. A 3'-hydroxy group is left at the tRNA terminus and a 5'-phosphoryl group is left at the trailer molecule.. Zinc phosphodiesterase, which displays some tRNA 3'-processing endonuclease activity. Probably involved in tRNA maturation, by removing a 3'-trailer from precursor tRNA. This chain is Ribonuclease Z, found in Lactobacillus johnsonii (strain CNCM I-12250 / La1 / NCC 533).